The following is a 310-amino-acid chain: Elongation factor Ts (310 aa).

The tract at residues 80-83 (TDFV) is involved in Mg(2+) ion dislocation from EF-Tu.

It belongs to the EF-Ts family.

It localises to the cytoplasm. In terms of biological role, associates with the EF-Tu.GDP complex and induces the exchange of GDP to GTP. It remains bound to the aminoacyl-tRNA.EF-Tu.GTP complex up to the GTP hydrolysis stage on the ribosome. This chain is Elongation factor Ts, found in Beijerinckia indica subsp. indica (strain ATCC 9039 / DSM 1715 / NCIMB 8712).